We begin with the raw amino-acid sequence, 910 residues long: Leucine--tRNA ligase (910 aa).

Positions 42-52 match the 'HIGH' region motif; the sequence is PYPSGKLHMGH. A 'KMSKS' region motif is present at residues 668-672; that stretch reads KMSKS. Lys671 is a binding site for ATP.

It belongs to the class-I aminoacyl-tRNA synthetase family.

It is found in the cytoplasm. The enzyme catalyses tRNA(Leu) + L-leucine + ATP = L-leucyl-tRNA(Leu) + AMP + diphosphate. In Neisseria meningitidis serogroup A / serotype 4A (strain DSM 15465 / Z2491), this protein is Leucine--tRNA ligase.